Here is a 262-residue protein sequence, read N- to C-terminus: Hydroxyethylthiazole kinase (262 aa).

Met-43 is a binding site for substrate. Residues Arg-118 and Thr-164 each contribute to the ATP site. Ala-191 lines the substrate pocket.

Belongs to the Thz kinase family. The cofactor is Mg(2+).

The enzyme catalyses 5-(2-hydroxyethyl)-4-methylthiazole + ATP = 4-methyl-5-(2-phosphooxyethyl)-thiazole + ADP + H(+). It functions in the pathway cofactor biosynthesis; thiamine diphosphate biosynthesis; 4-methyl-5-(2-phosphoethyl)-thiazole from 5-(2-hydroxyethyl)-4-methylthiazole: step 1/1. In terms of biological role, catalyzes the phosphorylation of the hydroxyl group of 4-methyl-5-beta-hydroxyethylthiazole (THZ). The polypeptide is Hydroxyethylthiazole kinase (Cereibacter sphaeroides (strain KD131 / KCTC 12085) (Rhodobacter sphaeroides)).